We begin with the raw amino-acid sequence, 604 residues long: Elongation factor 4 (604 aa).

The tr-type G domain occupies 7 to 190 (SRLRNFCIIA…IVDRVPAPPD (184 aa)). Residues 19 to 24 (DHGKST) and 136 to 139 (NKID) contribute to the GTP site.

Belongs to the TRAFAC class translation factor GTPase superfamily. Classic translation factor GTPase family. LepA subfamily.

It is found in the cell inner membrane. The catalysed reaction is GTP + H2O = GDP + phosphate + H(+). Functionally, required for accurate and efficient protein synthesis under certain stress conditions. May act as a fidelity factor of the translation reaction, by catalyzing a one-codon backward translocation of tRNAs on improperly translocated ribosomes. Back-translocation proceeds from a post-translocation (POST) complex to a pre-translocation (PRE) complex, thus giving elongation factor G a second chance to translocate the tRNAs correctly. Binds to ribosomes in a GTP-dependent manner. The protein is Elongation factor 4 of Synechococcus sp. (strain RCC307).